A 198-amino-acid chain; its full sequence is Glycerol-3-phosphate acyltransferase (198 aa).

5 consecutive transmembrane segments (helical) span residues 6–26 (FLPVALVIGYLLGSIPFGLVL), 56–78 (LAAGTLLLDALKGTVAVVIAGYI), 83–101 (AAMAAGLGAFLGHLFPVWL), 113–133 (IGILLGLFWPAAVVFCLLWLA), and 155–175 (FLWWFGHLALSALFAVLTLLL).

Belongs to the PlsY family. As to quaternary structure, probably interacts with PlsX.

The protein resides in the cell inner membrane. It carries out the reaction an acyl phosphate + sn-glycerol 3-phosphate = a 1-acyl-sn-glycero-3-phosphate + phosphate. Its pathway is lipid metabolism; phospholipid metabolism. Catalyzes the transfer of an acyl group from acyl-phosphate (acyl-PO(4)) to glycerol-3-phosphate (G3P) to form lysophosphatidic acid (LPA). This enzyme utilizes acyl-phosphate as fatty acyl donor, but not acyl-CoA or acyl-ACP. This Bradyrhizobium diazoefficiens (strain JCM 10833 / BCRC 13528 / IAM 13628 / NBRC 14792 / USDA 110) protein is Glycerol-3-phosphate acyltransferase.